Reading from the N-terminus, the 345-residue chain is 3-isopropylmalate dehydrogenase (345 aa).

The substrate site is built by R94, R104, R132, and D216. Residues D216, D240, and D244 each contribute to the Mg(2+) site. Residue 274-286 (GSAPDIAGQGIAN) participates in NAD(+) binding.

It belongs to the isocitrate and isopropylmalate dehydrogenases family. LeuB type 1 subfamily. As to quaternary structure, homodimer. Requires Mg(2+) as cofactor. The cofactor is Mn(2+).

It localises to the cytoplasm. The enzyme catalyses (2R,3S)-3-isopropylmalate + NAD(+) = 4-methyl-2-oxopentanoate + CO2 + NADH. Its pathway is amino-acid biosynthesis; L-leucine biosynthesis; L-leucine from 3-methyl-2-oxobutanoate: step 3/4. Catalyzes the oxidation of 3-carboxy-2-hydroxy-4-methylpentanoate (3-isopropylmalate) to 3-carboxy-4-methyl-2-oxopentanoate. The product decarboxylates to 4-methyl-2 oxopentanoate. This Streptococcus pneumoniae (strain ATCC BAA-255 / R6) protein is 3-isopropylmalate dehydrogenase.